Consider the following 436-residue polypeptide: UDP-N-acetylmuramate--L-alanine ligase (436 aa).

108–114 lines the ATP pocket; that stretch reads GAHGKTS.

This sequence belongs to the MurCDEF family.

Its subcellular location is the cytoplasm. The enzyme catalyses UDP-N-acetyl-alpha-D-muramate + L-alanine + ATP = UDP-N-acetyl-alpha-D-muramoyl-L-alanine + ADP + phosphate + H(+). The protein operates within cell wall biogenesis; peptidoglycan biosynthesis. Functionally, cell wall formation. This Bacillus cytotoxicus (strain DSM 22905 / CIP 110041 / 391-98 / NVH 391-98) protein is UDP-N-acetylmuramate--L-alanine ligase.